The chain runs to 138 residues: Large ribosomal subunit protein uL16 (138 aa).

Belongs to the universal ribosomal protein uL16 family. As to quaternary structure, part of the 50S ribosomal subunit.

In terms of biological role, binds 23S rRNA and is also seen to make contacts with the A and possibly P site tRNAs. This chain is Large ribosomal subunit protein uL16, found in Gluconacetobacter diazotrophicus (strain ATCC 49037 / DSM 5601 / CCUG 37298 / CIP 103539 / LMG 7603 / PAl5).